The chain runs to 424 residues: UDP-N-acetylglucosamine 1-carboxyvinyltransferase (424 aa).

Lys-22–Asn-23 is a phosphoenolpyruvate binding site. Residue Arg-93 coordinates UDP-N-acetyl-alpha-D-glucosamine. Cys-117 serves as the catalytic Proton donor. Cys-117 is modified (2-(S-cysteinyl)pyruvic acid O-phosphothioketal). Residues Arg-122 to Leu-126, Ser-164 to Gly-166, Asp-307, and Ile-329 each bind UDP-N-acetyl-alpha-D-glucosamine.

Belongs to the EPSP synthase family. MurA subfamily.

The protein localises to the cytoplasm. The enzyme catalyses phosphoenolpyruvate + UDP-N-acetyl-alpha-D-glucosamine = UDP-N-acetyl-3-O-(1-carboxyvinyl)-alpha-D-glucosamine + phosphate. It participates in cell wall biogenesis; peptidoglycan biosynthesis. Cell wall formation. Adds enolpyruvyl to UDP-N-acetylglucosamine. The polypeptide is UDP-N-acetylglucosamine 1-carboxyvinyltransferase (Haemophilus influenzae (strain ATCC 51907 / DSM 11121 / KW20 / Rd)).